The sequence spans 417 residues: Serine hydroxymethyltransferase (417 aa).

(6S)-5,6,7,8-tetrahydrofolate-binding positions include L112 and 116-118 (GHL). At K221 the chain carries N6-(pyridoxal phosphate)lysine. E247 provides a ligand contact to (6S)-5,6,7,8-tetrahydrofolate.

Belongs to the SHMT family. Homodimer. The cofactor is pyridoxal 5'-phosphate.

The protein resides in the cytoplasm. The enzyme catalyses (6R)-5,10-methylene-5,6,7,8-tetrahydrofolate + glycine + H2O = (6S)-5,6,7,8-tetrahydrofolate + L-serine. The protein operates within one-carbon metabolism; tetrahydrofolate interconversion. It participates in amino-acid biosynthesis; glycine biosynthesis; glycine from L-serine: step 1/1. Its function is as follows. Catalyzes the reversible interconversion of serine and glycine with tetrahydrofolate (THF) serving as the one-carbon carrier. This reaction serves as the major source of one-carbon groups required for the biosynthesis of purines, thymidylate, methionine, and other important biomolecules. Also exhibits THF-independent aldolase activity toward beta-hydroxyamino acids, producing glycine and aldehydes, via a retro-aldol mechanism. In Borrelia hermsii (strain HS1 / DAH), this protein is Serine hydroxymethyltransferase.